Reading from the N-terminus, the 468-residue chain is 3-isopropylmalate dehydratase large subunit (468 aa).

Cysteine 349, cysteine 409, and cysteine 412 together coordinate [4Fe-4S] cluster.

Belongs to the aconitase/IPM isomerase family. LeuC type 1 subfamily. Heterodimer of LeuC and LeuD. It depends on [4Fe-4S] cluster as a cofactor.

It catalyses the reaction (2R,3S)-3-isopropylmalate = (2S)-2-isopropylmalate. The protein operates within amino-acid biosynthesis; L-leucine biosynthesis; L-leucine from 3-methyl-2-oxobutanoate: step 2/4. In terms of biological role, catalyzes the isomerization between 2-isopropylmalate and 3-isopropylmalate, via the formation of 2-isopropylmaleate. The sequence is that of 3-isopropylmalate dehydratase large subunit from Nitrobacter hamburgensis (strain DSM 10229 / NCIMB 13809 / X14).